Reading from the N-terminus, the 239-residue chain is Carboxy-S-adenosyl-L-methionine synthase (239 aa).

S-adenosyl-L-methionine-binding positions include Y35, 64–66 (GCS), 88–89 (DN), and R195.

Belongs to the class I-like SAM-binding methyltransferase superfamily. Cx-SAM synthase family. In terms of assembly, homodimer.

It catalyses the reaction prephenate + S-adenosyl-L-methionine = carboxy-S-adenosyl-L-methionine + 3-phenylpyruvate + H2O. In terms of biological role, catalyzes the conversion of S-adenosyl-L-methionine (SAM) to carboxy-S-adenosyl-L-methionine (Cx-SAM). The sequence is that of Carboxy-S-adenosyl-L-methionine synthase from Helicobacter pylori (strain G27).